The chain runs to 201 residues: uncharacterized protein (201 aa).

4 helical membrane passes run 9 to 29, 42 to 62, 86 to 106, and 126 to 146; these read YNVF…ILVA, FLFV…FFDV, SGVI…VVMV, and LPYL…SIGM. 2 stretches are compositionally biased toward basic and acidic residues: residues 165-174 and 182-191; these read EPTDPNKTDN and DENKKNEKEQ. The tract at residues 165–201 is disordered; sequence EPTDPNKTDNRAVVINLDENKKNEKEQSPPSAEMTSL. The segment covering 192-201 has biased composition (polar residues); sequence SPPSAEMTSL.

Its subcellular location is the cell membrane. This is an uncharacterized protein from Mycoplasma genitalium (strain ATCC 33530 / DSM 19775 / NCTC 10195 / G37) (Mycoplasmoides genitalium).